A 232-amino-acid polypeptide reads, in one-letter code: Glutathione S-transferase U10 (232 aa).

The GST N-terminal domain occupies 6–85 (SKVILHGTWI…YIDETWTNSP (80 aa)). Glutathione is bound by residues 16 to 17 (ST), 42 to 43 (NK), 56 to 57 (KI), and 69 to 70 (ES). The GST C-terminal domain maps to 91 to 226 (DPYERAQVRF…FIQKYRQKCL (136 aa)).

Belongs to the GST superfamily. Tau family.

It is found in the cytoplasm. Its subcellular location is the cytosol. The catalysed reaction is RX + glutathione = an S-substituted glutathione + a halide anion + H(+). Its function is as follows. May be involved in the conjugation of reduced glutathione to a wide number of exogenous and endogenous hydrophobic electrophiles and have a detoxification role against certain herbicides. The sequence is that of Glutathione S-transferase U10 (GSTU10) from Arabidopsis thaliana (Mouse-ear cress).